The chain runs to 145 residues: Neuropeptide-like protein 68 (145 aa).

The signal sequence occupies residues 1 to 15; the sequence is MLLVLLFSLFSVGFG. The segment at 41–65 is disordered; the sequence is SSSSEDDTPDFPSLRDKRGVDPMSI.

Its subcellular location is the secreted. The protein is Neuropeptide-like protein 68 of Caenorhabditis elegans.